Consider the following 669-residue polypeptide: MSDVAQRLTELRKTLHEHGVRYYVEDAPTIPDAEYDRLMRELLELEAAHPELMSSDSPSLRVGGRPLDAFESVVHEIPMLSLDNAFDDGELESFYRRMTDRIQAVQHSAFCCEPKLDGLAVSLLYENGVLTRAATRGDGMTGENITENVRTIKAIPLRLQGADFPTRLEVRGEVFMPKAGFEALNARALKKGEKQFVNPRNAAAGSLRQLDSKITAQRPLAFYAYSVGVIEGGELATSHYQRFLQLKGWGLPICPETKLVTSLAEVKAFYQDILQRRQFLAYEIDGVVIKVDDIQLQERLGFVARAPRWAIAYKFPAQEELTLLNDVEFQVGRTGAITPVAKLEPVFVGGVTVSNATLHNADEIERLGVMVGDTVVIRRAGDVIPQIVSVVLERRPENAKSIVFPTRCPVCQSDVERVEGEAVARCSGGLICQAQRKEALKHFVSRKAMDVEGLGDKVIEQLVDREMVSTPADLFRLRAGELTILERMGPKSAQNVIDALNKAKQTTLPKFLYALGIREVGDATALNLAQHFLSLEAIQQASLEQFIEVPDVGVVVASHLLAFFAQDRNQQVINELLEQGITWPALTAAPVAVDSALAGKIVVLTGSFTQLSRNDAKAALQALGAKVTGSVSKNTDIVFAGEAAGSKLAKATELGIQVFDEQALIEFLK.

NAD(+)-binding positions include 32 to 36 (DAEYD), 81 to 82 (SL), and E113. Residue K115 is the N6-AMP-lysine intermediate of the active site. NAD(+) contacts are provided by R136, E173, K290, and K314. C408, C411, C426, and C432 together coordinate Zn(2+). The 78-residue stretch at 592 to 669 (AVDSALAGKI…DEQALIEFLK (78 aa)) folds into the BRCT domain.

This sequence belongs to the NAD-dependent DNA ligase family. LigA subfamily. Mg(2+) serves as cofactor. Requires Mn(2+) as cofactor.

It carries out the reaction NAD(+) + (deoxyribonucleotide)n-3'-hydroxyl + 5'-phospho-(deoxyribonucleotide)m = (deoxyribonucleotide)n+m + AMP + beta-nicotinamide D-nucleotide.. DNA ligase that catalyzes the formation of phosphodiester linkages between 5'-phosphoryl and 3'-hydroxyl groups in double-stranded DNA using NAD as a coenzyme and as the energy source for the reaction. It is essential for DNA replication and repair of damaged DNA. This is DNA ligase from Vibrio cholerae serotype O1 (strain ATCC 39541 / Classical Ogawa 395 / O395).